The primary structure comprises 116 residues: Ferredoxin-thioredoxin reductase, catalytic chain (116 aa).

C57 lines the [4Fe-4S] cluster pocket. Residue C59 is the Nucleophile of the active site. Cysteines 59 and 89 form a disulfide. Positions 76, 78, and 87 each coordinate [4Fe-4S] cluster.

The protein belongs to the ferredoxin thioredoxin reductase beta subunit family. Heterodimer of subunit A (variable subunit) and subunit B (catalytic subunit). Heterodimeric FTR forms a complex with ferredoxin and thioredoxin. Requires [4Fe-4S] cluster as cofactor.

The protein localises to the plastid. Its subcellular location is the chloroplast. The enzyme catalyses [thioredoxin]-disulfide + 2 reduced [2Fe-2S]-[ferredoxin] + 2 H(+) = [thioredoxin]-dithiol + 2 oxidized [2Fe-2S]-[ferredoxin]. Catalytic subunit of the ferredoxin-thioredoxin reductase (FTR), which catalyzes the two-electron reduction of thioredoxins by the electrons provided by reduced ferredoxin. The sequence is that of Ferredoxin-thioredoxin reductase, catalytic chain (ftrB) from Pyropia yezoensis (Susabi-nori).